A 122-amino-acid chain; its full sequence is S-adenosylmethionine decarboxylase proenzyme (122 aa).

The active-site Schiff-base intermediate with substrate; via pyruvic acid is the Ser63. Ser63 bears the Pyruvic acid (Ser); by autocatalysis mark. The Proton acceptor; for processing activity role is filled by His68. Cys83 (proton donor; for catalytic activity) is an active-site residue.

Belongs to the prokaryotic AdoMetDC family. Type 1 subfamily. As to quaternary structure, heterotetramer of two alpha and two beta chains arranged as a dimer of alpha/beta heterodimers. Pyruvate serves as cofactor. In terms of processing, is synthesized initially as an inactive proenzyme. Formation of the active enzyme involves a self-maturation process in which the active site pyruvoyl group is generated from an internal serine residue via an autocatalytic post-translational modification. Two non-identical subunits are generated from the proenzyme in this reaction, and the pyruvate is formed at the N-terminus of the alpha chain, which is derived from the carboxyl end of the proenzyme. The post-translation cleavage follows an unusual pathway, termed non-hydrolytic serinolysis, in which the side chain hydroxyl group of the serine supplies its oxygen atom to form the C-terminus of the beta chain, while the remainder of the serine residue undergoes an oxidative deamination to produce ammonia and the pyruvoyl group blocking the N-terminus of the alpha chain.

The enzyme catalyses S-adenosyl-L-methionine + H(+) = S-adenosyl 3-(methylsulfanyl)propylamine + CO2. Its pathway is amine and polyamine biosynthesis; S-adenosylmethioninamine biosynthesis; S-adenosylmethioninamine from S-adenosyl-L-methionine: step 1/1. Catalyzes the decarboxylation of S-adenosylmethionine to S-adenosylmethioninamine (dcAdoMet), the propylamine donor required for the synthesis of the polyamines spermine and spermidine from the diamine putrescine. The chain is S-adenosylmethionine decarboxylase proenzyme from Methanococcus maripaludis (strain C7 / ATCC BAA-1331).